Reading from the N-terminus, the 341-residue chain is NADH-quinone oxidoreductase subunit H (341 aa).

The next 8 helical transmembrane spans lie at 16–36 (LLII…AVAY), 86–106 (VVFV…WAVI), 119–139 (VGVL…IMAG), 165–185 (IGFI…SDVV), 191–211 (MWFI…GLAE), 254–274 (GAMT…LGWL), 276–296 (IPGL…FLWV), and 315–335 (VFLP…TAFG).

It belongs to the complex I subunit 1 family. As to quaternary structure, NDH-1 is composed of 14 different subunits. Subunits NuoA, H, J, K, L, M, N constitute the membrane sector of the complex.

The protein resides in the cell inner membrane. It carries out the reaction a quinone + NADH + 5 H(+)(in) = a quinol + NAD(+) + 4 H(+)(out). Its function is as follows. NDH-1 shuttles electrons from NADH, via FMN and iron-sulfur (Fe-S) centers, to quinones in the respiratory chain. The immediate electron acceptor for the enzyme in this species is believed to be ubiquinone. Couples the redox reaction to proton translocation (for every two electrons transferred, four hydrogen ions are translocated across the cytoplasmic membrane), and thus conserves the redox energy in a proton gradient. This subunit may bind ubiquinone. The polypeptide is NADH-quinone oxidoreductase subunit H (Paramagnetospirillum magneticum (strain ATCC 700264 / AMB-1) (Magnetospirillum magneticum)).